The chain runs to 296 residues: 3-methyl-2-oxobutanoate hydroxymethyltransferase (296 aa).

A disordered region spans residues 1-33; the sequence is MDASDTPTHPAPHPADPAATPYGAPTTPPRPLR. Low complexity predominate over residues 16–25; sequence DPAATPYGAP. Mg(2+)-binding residues include D77 and D116. 3-methyl-2-oxobutanoate contacts are provided by residues 77–78, D116, and K146; that span reads DS. Residue E148 coordinates Mg(2+). E214 acts as the Proton acceptor in catalysis.

This sequence belongs to the PanB family. Homodecamer; pentamer of dimers. The cofactor is Mg(2+).

It localises to the cytoplasm. It carries out the reaction 3-methyl-2-oxobutanoate + (6R)-5,10-methylene-5,6,7,8-tetrahydrofolate + H2O = 2-dehydropantoate + (6S)-5,6,7,8-tetrahydrofolate. The protein operates within cofactor biosynthesis; (R)-pantothenate biosynthesis; (R)-pantoate from 3-methyl-2-oxobutanoate: step 1/2. Its function is as follows. Catalyzes the reversible reaction in which hydroxymethyl group from 5,10-methylenetetrahydrofolate is transferred onto alpha-ketoisovalerate to form ketopantoate. The protein is 3-methyl-2-oxobutanoate hydroxymethyltransferase of Frankia casuarinae (strain DSM 45818 / CECT 9043 / HFP020203 / CcI3).